The primary structure comprises 241 residues: 6-hydroxymethyl-7,8-dihydropterin pyrophosphokinase (241 aa).

The protein belongs to the archaeal 6-HMPDK family. The cofactor is Mg(2+).

It carries out the reaction 6-hydroxymethyl-7,8-dihydropterin + ATP = (7,8-dihydropterin-6-yl)methyl diphosphate + AMP + H(+). It functions in the pathway cofactor biosynthesis; 5,6,7,8-tetrahydromethanopterin biosynthesis. Its function is as follows. Catalyzes the transfer of diphosphate from ATP to 6-hydroxymethyl-7,8-dihydropterin (6-HMD), leading to 6-hydroxymethyl-7,8-dihydropterin diphosphate (6-HMDP). This chain is 6-hydroxymethyl-7,8-dihydropterin pyrophosphokinase, found in Methanocaldococcus jannaschii (strain ATCC 43067 / DSM 2661 / JAL-1 / JCM 10045 / NBRC 100440) (Methanococcus jannaschii).